Reading from the N-terminus, the 160-residue chain is Epithelial membrane protein 1 (160 aa).

A helical transmembrane segment spans residues 1-21; the sequence is MLVLLAGLFVVHIATAIMLFV. N-linked (GlcNAc...) asparagine glycosylation is present at asparagine 43. 3 consecutive transmembrane segments (helical) span residues 67–87, 95–115, and 137–157; these read FMIL…FQLF, FFLS…GVSI, and FILT…YMVL.

Belongs to the PMP-22/EMP/MP20 family. As to expression, most prominently found in the gastrointestinal tract, skin, lung, and brain but not in liver.

The protein localises to the membrane. In Rattus norvegicus (Rat), this protein is Epithelial membrane protein 1 (Emp1).